The sequence spans 130 residues: Small ribosomal subunit protein uS9 (130 aa).

Belongs to the universal ribosomal protein uS9 family.

The polypeptide is Small ribosomal subunit protein uS9 (Hamiltonella defensa subsp. Acyrthosiphon pisum (strain 5AT)).